The primary structure comprises 259 residues: Large ribosomal subunit protein eL8 (259 aa).

Positions methionine 1–asparagine 24 are disordered. Phosphoserine occurs at positions 11 and 33.

This sequence belongs to the eukaryotic ribosomal protein eL8 family. In terms of assembly, component of the large ribosomal subunit (LSU). Mature yeast ribosomes consist of a small (40S) and a large (60S) subunit. The 40S small subunit contains 1 molecule of ribosomal RNA (18S rRNA) and at least 33 different proteins. The large 60S subunit contains 3 rRNA molecules (25S, 5.8S and 5S rRNA) and at least 46 different proteins.

Its subcellular location is the cytoplasm. In terms of biological role, component of the ribosome, a large ribonucleoprotein complex responsible for the synthesis of proteins in the cell. The small ribosomal subunit (SSU) binds messenger RNAs (mRNAs) and translates the encoded message by selecting cognate aminoacyl-transfer RNA (tRNA) molecules. The large subunit (LSU) contains the ribosomal catalytic site termed the peptidyl transferase center (PTC), which catalyzes the formation of peptide bonds, thereby polymerizing the amino acids delivered by tRNAs into a polypeptide chain. The nascent polypeptides leave the ribosome through a tunnel in the LSU and interact with protein factors that function in enzymatic processing, targeting, and the membrane insertion of nascent chains at the exit of the ribosomal tunnel. In Schizosaccharomyces pombe (strain 972 / ATCC 24843) (Fission yeast), this protein is Large ribosomal subunit protein eL8 (rpl8).